Reading from the N-terminus, the 386-residue chain is MAALQYLESLKNTHPELGEWYNSLADLYQKKLWHQLTLKLEQFIALAVFQAGDALIQFYHNFITDFETKINLLKLAHFAVVVSRQYSEKEAAVSYLESVIEKLRATKEPRITEPIIYIETQKALFKLEQGDQKECKKILDDGKSSLDSMTDIDPSVYANFYWVSSQYHKCRQEFSDFYKSALLYLAYTSVEDLSESFKLDLAFDLSLSALLGENIYNFGELLAHPILKSLLGTNVEWLYHILQAFNHGDLVQYQELCRVHNASLIAQPALVENEKKLLEKINILCLIEIIFSRPAEDRTIPLSIIAERTKLSIEDVEHLLMKSLSVHLIEGIIDQVNGTIYVSWAQPRVLGIPQIKALRDQLDSWVDKVHTTLLSVEAETPDLVAA.

Ala2 carries the N-acetylalanine modification. A PCI domain is found at 173 to 347 (EFSDFYKSAL…GTIYVSWAQP (175 aa)).

It belongs to the proteasome subunit S11 family. As to quaternary structure, component of the 19S regulatory particle (RP/PA700) lid subcomplex of the 26S proteasome. The 26S proteasome is composed of a core protease (CP), known as the 20S proteasome, capped at one or both ends by the 19S regulatory particle (RP/PA700). The RP/PA700 complex is composed of at least 17 different subunits in two subcomplexes, the base and the lid, which form the portions proximal and distal to the 20S proteolytic core, respectively. In terms of tissue distribution, ubiquitous with highest expression in flowers.

Acts as a regulatory subunit of the 26S proteasome which is involved in the ATP-dependent degradation of ubiquitinated proteins. The polypeptide is 26S proteasome non-ATPase regulatory subunit 13 homolog A (RPN9A) (Arabidopsis thaliana (Mouse-ear cress)).